Reading from the N-terminus, the 726-residue chain is MPKEHKKRGRREEQKKRKRDHDHVDAAPKRLKKEDDVELESIENGEAFHHEPVDVTRPGELTYYGMLDDEEQEYFKRADEMLELNQFEDPEARNLFLASVYKEADGKELKIANSQSCSRLLERLILLSSPDQLKNLFQKFNGHFLNLVQHRFASHCCEALFIHAAPVVTLELAEPQTLQTPPSSDPNAIIVSMESLFLYTLAELEEHLGYLMTDRFASHVLRVLLVVLSGAPLAKENKNKSVLQSKRKEKVGIAGTERGQDWVLEKRPVPKSFLEALEKTINASASTLDTANLRLLATHPLGNPTLQLLLKLELAHFGKSRAKDENSIIHKMLPDDPIAEGTESAAFINGLVYDPIGSRLLETIIESAPGKLFKQIYSEFFKERMGSLSRNEIAGYVAGKILERLGKDDLDEAMRQIVEQIPNLVERNRTAIIKTLLERCIARNVDISLIKDQLEAVYSGPNGFEVTRILRVSESPAENLKQNGKQDHSPEKVHGSLLAQTMMAVDGPLGDLIFDSLAKLTPELSVQLARDPTASRTLQAALTAEHASVIFRRKMIQQFYGHVGELALDPAASRVIDAVWHGTHGLAFIRERIAEELAENENSLRESFVGRAVWRNWRMDLYKRKRGDWVKQSKYTAGNDGFQSFPESNGESSTTPPHRQSHAQNQRGGKHMSAIELARQKHAAKAVEAKKREAQTDKKMKREKKDKHVGVAESSKGKEKASVVAQ.

Residues 1-52 are disordered; the sequence is MPKEHKKRGRREEQKKRKRDHDHVDAAPKRLKKEDDVELESIENGEAFHHEP. Positions 10 to 35 are enriched in basic and acidic residues; it reads RREEQKKRKRDHDHVDAAPKRLKKED. Pumilio repeat units lie at residues 103 to 138, 139 to 174, 203 to 244, 343 to 378, 379 to 419, 519 to 557, and 558 to 595; these read EADG…NLFQ, KFNG…ELAE, ELEE…SVLQ, ESAA…QIYS, EFFK…QIVE, KLTP…KMIQ, and QFYG…RIAE. Residues 640-667 show a composition bias toward polar residues; sequence DGFQSFPESNGESSTTPPHRQSHAQNQR. Residues 640-726 are disordered; it reads DGFQSFPESN…GKEKASVVAQ (87 aa). 2 stretches are compositionally biased toward basic and acidic residues: residues 685-700 and 706-726; these read KAVE…DKKM and DKHV…VVAQ.

The protein belongs to the NOP9 family.

Its subcellular location is the nucleus. The protein localises to the nucleolus. Functionally, RNA-binding nucleolar protein required for pre-rRNA processing. Involved in production of 18S rRNA and assembly of small ribosomal subunit. The chain is Nucleolar protein 9 (NOP9) from Phaeosphaeria nodorum (strain SN15 / ATCC MYA-4574 / FGSC 10173) (Glume blotch fungus).